A 301-amino-acid chain; its full sequence is Protoheme IX farnesyltransferase (301 aa).

The next 9 helical transmembrane spans lie at 29-49 (VVAL…PGTV), 51-71 (LVPL…AAAF), 96-116 (ISII…FIIL), 123-143 (LTAW…TAYL), 151-171 (IVVG…AVTG), 177-197 (ALLL…ALAI), 223-243 (CIFL…LVGM), 244-264 (CGPV…YKAW), and 281-301 (FSIY…YLWV).

The protein belongs to the UbiA prenyltransferase family. Protoheme IX farnesyltransferase subfamily.

The protein resides in the cell inner membrane. The catalysed reaction is heme b + (2E,6E)-farnesyl diphosphate + H2O = Fe(II)-heme o + diphosphate. The protein operates within porphyrin-containing compound metabolism; heme O biosynthesis; heme O from protoheme: step 1/1. In terms of biological role, converts heme B (protoheme IX) to heme O by substitution of the vinyl group on carbon 2 of heme B porphyrin ring with a hydroxyethyl farnesyl side group. The chain is Protoheme IX farnesyltransferase from Shewanella pealeana (strain ATCC 700345 / ANG-SQ1).